The chain runs to 180 residues: Large ribosomal subunit protein uL10 (180 aa).

The protein belongs to the universal ribosomal protein uL10 family. As to quaternary structure, part of the ribosomal stalk of the 50S ribosomal subunit. The N-terminus interacts with L11 and the large rRNA to form the base of the stalk. The C-terminus forms an elongated spine to which L12 dimers bind in a sequential fashion forming a multimeric L10(L12)X complex.

Functionally, forms part of the ribosomal stalk, playing a central role in the interaction of the ribosome with GTP-bound translation factors. This Thermosipho africanus (strain TCF52B) protein is Large ribosomal subunit protein uL10.